Reading from the N-terminus, the 76-residue chain is MMKFPVYIHSISGNSVFNNGFAVSISPFSVSKTTEGSGGSNTGLVFESNALSQTSSANQAQNVTYAIQELLSKLLA.

Belongs to the GerPA/GerPF family.

The chain is Spore germination protein-like protein YdzR (ydzR) from Bacillus subtilis (strain 168).